The primary structure comprises 402 residues: Phosphoglycerate kinase (402 aa).

Substrate-binding positions include 24 to 26 (DFN), Arg40, 63 to 66 (HFGR), Arg122, and Arg155. Residues Lys206, Gly297, Glu328, and 357 to 360 (GGDS) each bind ATP.

The protein belongs to the phosphoglycerate kinase family. Monomer.

Its subcellular location is the cytoplasm. The catalysed reaction is (2R)-3-phosphoglycerate + ATP = (2R)-3-phospho-glyceroyl phosphate + ADP. The protein operates within carbohydrate degradation; glycolysis; pyruvate from D-glyceraldehyde 3-phosphate: step 2/5. The polypeptide is Phosphoglycerate kinase (Prochlorococcus marinus (strain MIT 9211)).